Here is a 115-residue protein sequence, read N- to C-terminus: Autophagy-related protein 8i (115 aa).

Glycine 115 is lipidated: Phosphatidylethanolamine amidated glycine.

The protein belongs to the ATG8 family. Interacts with ATG4. Interacts with NBR1. In terms of processing, gly-115 forms then a thioester bond with the 'Cys-558' of ATG7 (E1-like activating enzyme) before being transferred to the 'Cys-258' of ATG3 (the specific E2 conjugating enzyme), in order to be finally amidated with phosphatidylethanolamine. This lipid modification anchors ATG8 to autophagosomes. As to expression, constitutively expressed.

Its subcellular location is the cytoplasmic vesicle. The protein localises to the autophagosome membrane. It is found in the vacuole membrane. The protein resides in the cytoplasm. It localises to the cytoskeleton. In terms of biological role, ubiquitin-like modifier involved in autophagosomes formation. May mediate the delivery of the autophagosomes to the vacuole via the microtubule cytoskeleton. In Arabidopsis thaliana (Mouse-ear cress), this protein is Autophagy-related protein 8i (ATG8I).